The sequence spans 248 residues: Anamorsin homolog (248 aa).

Positions 4-129 (FKGLQKSLYI…ETGSSARLSF (126 aa)) are N-terminal SAM-like domain. Positions 130–161 (AKKNANAVNVWKISGDDEELIDEEELLDEEDK) are linker. [2Fe-2S] cluster is bound by residues Cys172, Cys181, Cys184, and Cys186. The fe-S binding site A stretch occupies residues 172–186 (CSTTGKRKACKNCSC). Cys209, Cys212, Cys220, and Cys223 together coordinate [4Fe-4S] cluster. 2 short sequence motifs (cx2C motif) span residues 209 to 212 (CGNC) and 220 to 223 (CSTC). A fe-S binding site B region spans residues 209 to 223 (CGNCYLGDAFRCSTC).

It belongs to the anamorsin family. As to quaternary structure, monomer. Requires [2Fe-2S] cluster as cofactor. The cofactor is [4Fe-4S] cluster.

Its subcellular location is the cytoplasm. The protein localises to the mitochondrion intermembrane space. Its function is as follows. Component of the cytosolic iron-sulfur (Fe-S) protein assembly (CIA) machinery. Required for the maturation of extramitochondrial Fe-S proteins. Part of an electron transfer chain functioning in an early step of cytosolic Fe-S biogenesis, facilitating the de novo assembly of a [4Fe-4S] cluster on the cytosolic Fe-S scaffold complex. Electrons are transferred from NADPH via a FAD- and FMN-containing diflavin oxidoreductase. Together with the diflavin oxidoreductase, also required for the assembly of the diferric tyrosyl radical cofactor of ribonucleotide reductase (RNR), probably by providing electrons for reduction during radical cofactor maturation in the catalytic small subunit. In Drosophila simulans (Fruit fly), this protein is Anamorsin homolog.